The following is a 476-amino-acid chain: Serine--tRNA ligase (476 aa).

280-282 is a binding site for L-serine; sequence TAE. 311–313 lines the ATP pocket; sequence RAE. Glu-334 lines the L-serine pocket. ATP is bound at residue 401 to 404; the sequence is EISS. Ser-436 serves as a coordination point for L-serine.

This sequence belongs to the class-II aminoacyl-tRNA synthetase family. Type-1 seryl-tRNA synthetase subfamily. As to quaternary structure, homodimer. The tRNA molecule binds across the dimer.

It localises to the cytoplasm. It catalyses the reaction tRNA(Ser) + L-serine + ATP = L-seryl-tRNA(Ser) + AMP + diphosphate + H(+). The enzyme catalyses tRNA(Sec) + L-serine + ATP = L-seryl-tRNA(Sec) + AMP + diphosphate + H(+). It participates in aminoacyl-tRNA biosynthesis; selenocysteinyl-tRNA(Sec) biosynthesis; L-seryl-tRNA(Sec) from L-serine and tRNA(Sec): step 1/1. Functionally, catalyzes the attachment of serine to tRNA(Ser). Is also able to aminoacylate tRNA(Sec) with serine, to form the misacylated tRNA L-seryl-tRNA(Sec), which will be further converted into selenocysteinyl-tRNA(Sec). This is Serine--tRNA ligase from Rhodopseudomonas palustris (strain HaA2).